The chain runs to 121 residues: Probable K(+)/H(+) antiporter subunit G (121 aa).

3 helical membrane passes run 10–32 (WAAL…GSLG), 45–67 (APTI…CFAV), and 72–94 (WVFH…LMLL).

It belongs to the CPA3 antiporters (TC 2.A.63) subunit G family. In terms of assembly, may form a hetero-oligomeric complex that consists of six subunits: PhaAB, PhaC, PhaD, PhaE, PhaF and PhaG.

It localises to the cell membrane. Part of a K(+) efflux system which is required for the adaptation of R.meliloti to alkaline pH as well as for the infection process during symbiotic nodule development. The sequence is that of Probable K(+)/H(+) antiporter subunit G (phaG) from Rhizobium meliloti (strain 1021) (Ensifer meliloti).